The following is a 645-amino-acid chain: ATP-dependent zinc metalloprotease FtsH (645 aa).

Residues 1–8 lie on the Cytoplasmic side of the membrane; the sequence is MDFNREHK. The helical transmembrane segment at 9–29 threads the bilayer; sequence INFLYVLAAMVGVLLIQSLVS. At 30 to 105 the chain is on the periplasmic side; that stretch reads QPDHIRTIPY…FSGEPEPGPW (76 aa). A helical membrane pass occupies residues 106-126; sequence PTILGWLMPIVGFALVWMFLI. Residues 127–645 lie on the Cytoplasmic side of the membrane; sequence RPMSMGPGMD…ALTVEGGEAQ (519 aa). 199–206 contacts ATP; it reads GPPGTGKT. Residue His-423 participates in Zn(2+) binding. The active site involves Glu-424. The Zn(2+) site is built by His-427 and Asp-500. A disordered region spans residues 612–645; that stretch reads SASVLRDGGDGAADAGQDRSGEHRALTVEGGEAQ. The segment covering 627-637 has biased composition (basic and acidic residues); the sequence is GQDRSGEHRAL.

It in the central section; belongs to the AAA ATPase family. In the C-terminal section; belongs to the peptidase M41 family. In terms of assembly, homohexamer. Zn(2+) is required as a cofactor.

The protein localises to the cell inner membrane. Functionally, acts as a processive, ATP-dependent zinc metallopeptidase for both cytoplasmic and membrane proteins. Plays a role in the quality control of integral membrane proteins. The sequence is that of ATP-dependent zinc metalloprotease FtsH from Paraburkholderia phymatum (strain DSM 17167 / CIP 108236 / LMG 21445 / STM815) (Burkholderia phymatum).